A 388-amino-acid chain; its full sequence is Quinolone resistance protein NorA (388 aa).

12 helical membrane-spanning segments follow: residues 5-25 (IFVL…VIPV), 42-62 (LLVA…GTLA), 69-89 (LIIC…AVGH), 99-119 (VIGG…IADI), 129-149 (FGYM…IGGF), 157-177 (MPFY…IVLI), 201-221 (WKVF…LSAF), 239-259 (DISI…IYFF), 269-289 (LTFI…LVFA), 293-313 (WSIM…RPAI), 331-351 (LNST…GALF), and 355-375 (IEAP…IVLI).

It belongs to the major facilitator superfamily. TCR/Tet family.

It is found in the cell membrane. Involved in quinolone resistance. May constitute a membrane-associated active efflux pump of hydrophilic quinolones. The polypeptide is Quinolone resistance protein NorA (norA) (Staphylococcus aureus (strain MSSA476)).